The chain runs to 225 residues: Suppressor of cytokine signaling 3 (225 aa).

Positions 22–33 (LKTFSSKSEYQL) are kinase inhibitory region (KIR). Positions 34-45 (VVNAVRKLQESG) are extended SH2 subdomain (ESS). The SH2 domain maps to 46–142 (FYWSAVTGGE…TPSFSLPPTE (97 aa)). Positions 131–160 (PGTPSFSLPPTEPSSEVPEQPPAQALPGST) are disordered. An SOCS box domain is found at 177 to 224 (VLSRPLSSNVATLQHLCRKTVNGHLDSYEKVTQLPGPIREFLDQYDAP).

Interacts with multiple activated proteins of the tyrosine kinase signaling pathway including IGF1 receptor, insulin receptor and JAK2. Binding to JAK2 is mediated through the KIR and SH2 domains to a phosphorylated tyrosine residue within the JAK2 JH1 domain. Binds specific activated tyrosine residues of the leptin, EPO, IL12, GSCF and gp130 receptors. Interaction with CSNK1E stabilizes SOCS3 protein. Component of the probable ECS(SOCS3) E3 ubiquitin-protein ligase complex which contains CUL5, RNF7/RBX2, elongin BC complex and SOCS3. Interacts with CUL5, RNF7, ELOB and ELOC. Interacts with FGFR3. Interacts with INSR. Interacts with BCL10; this interaction may interfere with BCL10-binding with PELI2. Interacts with NOD2 (via CARD domain); the interaction promotes NOD2 degradation. Post-translationally, phosphorylated on tyrosine residues after stimulation by the cytokines, IL-2, EPO or IGF1. As to expression, low expression in lung, spleen and thymus. Expressed in Th2 but not TH1 cells.

It functions in the pathway protein modification; protein ubiquitination. Its function is as follows. SOCS family proteins form part of a classical negative feedback system that regulates cytokine signal transduction. SOCS3 is involved in negative regulation of cytokines that signal through the JAK/STAT pathway. Inhibits cytokine signal transduction by binding to tyrosine kinase receptors including IL6ST/gp130, LIF, erythropoietin, insulin, IL12, GCSF and leptin receptors. Binding to JAK2 inhibits its kinase activity and regulates IL6 signaling. Suppresses fetal liver erythropoiesis. Regulates onset and maintenance of allergic responses mediated by T-helper type 2 cells. Probable substrate recognition component of a SCF-like ECS (Elongin BC-CUL2/5-SOCS-box protein) E3 ubiquitin-protein ligase complex which mediates the ubiquitination and subsequent proteasomal degradation of target proteins. This chain is Suppressor of cytokine signaling 3, found in Mus musculus (Mouse).